We begin with the raw amino-acid sequence, 448 residues long: Omega-6 fatty acid desaturase, chloroplastic (448 aa).

The transit peptide at 1 to 69 (MASRIADSLF…VKRRIGCIKA (69 aa)) directs the protein to the chloroplast. Position 70 is an N-acetylvaline (Val-70). Helical transmembrane passes span 124–144 (LKALKSVLISVTSYTLGLFMI) and 149–169 (WYLLPLAWAWTGTAITGFFVI). A Histidine box-1 motif is present at residues 171–175 (HDCAH). Residues 207 to 211 (HDRHH) carry the Histidine box-2 motif. 2 consecutive transmembrane segments (helical) span residues 282 to 302 (VFAFMAVGWPLIVYKVGILGW) and 303 to 323 (VKFWLMPWLGYHFWMSTFTMV). The Histidine box-3 signature appears at 367–371 (HIPHH).

This sequence belongs to the fatty acid desaturase type 1 family.

Its subcellular location is the plastid. The protein localises to the chloroplast inner membrane. It carries out the reaction a (9Z)-octadecenoyl-containing glycerolipid + 2 reduced [2Fe-2S]-[ferredoxin] + O2 + 2 H(+) = a (9Z,12Z)-octadecadienoyl-containing glycerolipid + 2 oxidized [2Fe-2S]-[ferredoxin] + 2 H2O. The protein operates within lipid metabolism; polyunsaturated fatty acid biosynthesis. Chloroplast omega-6 fatty acid desaturase introduces the second double bond in the biosynthesis of 16:3 and 18:3 fatty acids, important constituents of plant membranes. It is thought to use ferredoxin as an electron donor and to act on fatty acids esterified to galactolipids, sulfolipids and phosphatidylglycerol. In Arabidopsis thaliana (Mouse-ear cress), this protein is Omega-6 fatty acid desaturase, chloroplastic.